A 390-amino-acid chain; its full sequence is Phosphopentomutase (390 aa).

The Mn(2+) site is built by aspartate 9, aspartate 283, histidine 288, aspartate 324, histidine 325, and histidine 336.

Belongs to the phosphopentomutase family. Requires Mn(2+) as cofactor.

The protein resides in the cytoplasm. It carries out the reaction 2-deoxy-alpha-D-ribose 1-phosphate = 2-deoxy-D-ribose 5-phosphate. The catalysed reaction is alpha-D-ribose 1-phosphate = D-ribose 5-phosphate. It functions in the pathway carbohydrate degradation; 2-deoxy-D-ribose 1-phosphate degradation; D-glyceraldehyde 3-phosphate and acetaldehyde from 2-deoxy-alpha-D-ribose 1-phosphate: step 1/2. In terms of biological role, isomerase that catalyzes the conversion of deoxy-ribose 1-phosphate (dRib-1-P) and ribose 1-phosphate (Rib-1-P) to deoxy-ribose 5-phosphate (dRib-5-P) and ribose 5-phosphate (Rib-5-P), respectively. The polypeptide is Phosphopentomutase (Thermotoga maritima (strain ATCC 43589 / DSM 3109 / JCM 10099 / NBRC 100826 / MSB8)).